The chain runs to 217 residues: Large ribosomal subunit protein uL29m (217 aa).

It belongs to the universal ribosomal protein uL29 family. Component of the mitochondrial large ribosomal subunit. Mature mitochondrial ribosomes consist of a small (37S) and a large (54S) subunit. The 37S subunit contains at least 33 different proteins and 1 molecule of RNA (15S). The 54S subunit contains at least 45 different proteins and 1 molecule of RNA (21S).

The protein localises to the mitochondrion. This Aspergillus clavatus (strain ATCC 1007 / CBS 513.65 / DSM 816 / NCTC 3887 / NRRL 1 / QM 1276 / 107) protein is Large ribosomal subunit protein uL29m (mrpl4).